Reading from the N-terminus, the 737-residue chain is Catalase-peroxidase (737 aa).

The N-terminal stretch at 1 to 23 (MLKKILPVLITLAIVHNTPTAWA) is a signal peptide. The segment at residues 102–223 (WHGAGTYRIY…LAATQMGLIY (122 aa)) is a cross-link (tryptophyl-tyrosyl-methioninium (Trp-Tyr) (with M-249)). The Proton acceptor role is filled by His-103. Positions 223 to 249 (YVNPEGPNGKPDPVAAAKDIREAFARM) form a cross-link, tryptophyl-tyrosyl-methioninium (Tyr-Met) (with W-102). His-264 contributes to the heme b binding site.

The protein belongs to the peroxidase family. Peroxidase/catalase subfamily. Homodimer or homotetramer. Heme b serves as cofactor. Formation of the three residue Trp-Tyr-Met cross-link is important for the catalase, but not the peroxidase activity of the enzyme.

It carries out the reaction H2O2 + AH2 = A + 2 H2O. The catalysed reaction is 2 H2O2 = O2 + 2 H2O. Its function is as follows. Bifunctional enzyme with both catalase and broad-spectrum peroxidase activity. The protein is Catalase-peroxidase of Yersinia pseudotuberculosis serotype O:3 (strain YPIII).